Reading from the N-terminus, the 428-residue chain is Dihydroorotase (428 aa).

Zn(2+)-binding residues include H61 and H63. Substrate contacts are provided by residues 63-65 (HLR) and N95. Zn(2+)-binding residues include D153, H180, and H233. Residue N279 coordinates substrate. D306 is a binding site for Zn(2+). Residue D306 is part of the active site. Residues H310 and 324–325 (FG) contribute to the substrate site.

Belongs to the metallo-dependent hydrolases superfamily. DHOase family. Class I DHOase subfamily. Requires Zn(2+) as cofactor.

The enzyme catalyses (S)-dihydroorotate + H2O = N-carbamoyl-L-aspartate + H(+). Its pathway is pyrimidine metabolism; UMP biosynthesis via de novo pathway; (S)-dihydroorotate from bicarbonate: step 3/3. Catalyzes the reversible cyclization of carbamoyl aspartate to dihydroorotate. The polypeptide is Dihydroorotase (Geobacillus kaustophilus (strain HTA426)).